We begin with the raw amino-acid sequence, 85 residues long: Putative plasmid stability protein y4jJ (85 aa).

Residues 66-78 (EAEHFNQLRDKTP) are compositionally biased toward basic and acidic residues. The tract at residues 66–85 (EAEHFNQLRDKTPAEPMSFE) is disordered.

The protein to P.syringae pv tomato plasmid stability protein StbC.

In terms of biological role, involved in plasmid stability. This chain is Putative plasmid stability protein y4jJ, found in Sinorhizobium fredii (strain NBRC 101917 / NGR234).